The chain runs to 208 residues: Fibroblast growth factor 6 (208 aa).

The first 37 residues, 1–37 (MALGQRLFITMSRGAGRVQGTLQALVFLGVLVGMVVP), serve as a signal peptide directing secretion. A glycan (N-linked (GlcNAc...) asparagine) is linked at Asn45. A disulfide bond links Cys90 and Cys157.

The protein belongs to the heparin-binding growth factors family. As to quaternary structure, interacts with FGFR1, FGFR2 and FGFR4. Affinity between fibroblast growth factors (FGFs) and their receptors is increased by heparan sulfate glycosaminoglycans that function as coreceptors. In terms of tissue distribution, embryos, adult muscles and adult testis.

It localises to the secreted. Its subcellular location is the extracellular space. In terms of biological role, plays an important role in the regulation of cell proliferation, cell differentiation, angiogenesis and myogenesis, and is required for normal muscle regeneration. In Mus musculus (Mouse), this protein is Fibroblast growth factor 6 (Fgf6).